A 225-amino-acid polypeptide reads, in one-letter code: Probable septum site-determining protein MinC (225 aa).

Belongs to the MinC family. In terms of assembly, interacts with MinD and FtsZ.

Its function is as follows. Cell division inhibitor that blocks the formation of polar Z ring septums. Rapidly oscillates between the poles of the cell to destabilize FtsZ filaments that have formed before they mature into polar Z rings. Prevents FtsZ polymerization. In Listeria welshimeri serovar 6b (strain ATCC 35897 / DSM 20650 / CCUG 15529 / CIP 8149 / NCTC 11857 / SLCC 5334 / V8), this protein is Probable septum site-determining protein MinC.